Here is a 273-residue protein sequence, read N- to C-terminus: MSQLSTIIEQAFEDCANFTAADCPSEIRQAVEEAIAGLDNGTLRVAEKINGEWVVHQWLKKAVLLSFKLNDNKPIESCDLRFYDKVETKFSGWTEEQFKAAGVRVVPPAVARRGSFQAKNVVLMPSYVNIGAYVDEGTMVDTWATVGSCAQIGKNVHLSGGVGIGGVLEPLQANPTIIEDNCFIGARSEIVEGVIVEEGSVISMGVYIGQSTRIYDRETGEIHYGRVPAGSVVVPGNLPSADGKYSLYAAIIVKKVDAQTRAKTSLNDLLRAD.

It belongs to the transferase hexapeptide repeat family.

It is found in the cytoplasm. It carries out the reaction (S)-2,3,4,5-tetrahydrodipicolinate + succinyl-CoA + H2O = (S)-2-succinylamino-6-oxoheptanedioate + CoA. Its pathway is amino-acid biosynthesis; L-lysine biosynthesis via DAP pathway; LL-2,6-diaminopimelate from (S)-tetrahydrodipicolinate (succinylase route): step 1/3. The protein is 2,3,4,5-tetrahydropyridine-2,6-dicarboxylate N-succinyltransferase of Acinetobacter baumannii (strain SDF).